Consider the following 1205-residue polypeptide: Centrosome and spindle pole associated protein 1 (1205 aa).

Coiled coils occupy residues 12 to 34 and 87 to 108; these read QKAK…EMKG and KLKE…TQAK. The interval 16 to 37 is disordered; it reads LAKDKAELESDPPYMEMKGKAS. Residues 158–173 show a composition bias toward basic and acidic residues; the sequence is STEKVRQVEKNIEPKS. Disordered stretches follow at residues 158–187, 222–277, and 380–467; these read STEK…KSDL, SRRP…PGVS, and QQKK…GSTL. The span at 176 to 187 shows a compositional bias: polar residues; that stretch reads NKNPISQGKSDL. Basic and acidic residues-rich tracts occupy residues 222 to 233 and 257 to 275; these read SRRPLKQTKEEV and ANGE…RDPG. A coiled-coil region spans residues 357–391; the sequence is EDRELTKRRKEKYRQELLEQIAEQQKKKRREKDLA. Composition is skewed to basic and acidic residues over residues 401-410 and 417-428; these read DPEKSPDRLK and RHFEEMPPERPR. Residue Ser405 is modified to Phosphoserine. Residues 433–447 show a composition bias toward pro residues; it reads TPPPPFSAPSSPSVP. Residues 574-618 adopt a coiled-coil conformation; that stretch reads STQSLQSYQEALQEQIREREARRKKERLEKEEYEAKLEAEMRIYN. Positions 677-704 are disordered; the sequence is AENLEDSANKNSGPLQTQSSPFARGNTF. Polar residues predominate over residues 685 to 697; it reads NKNSGPLQTQSSP. Positions 724 to 813 form a coiled coil; sequence RFQIEEKRQR…EKHNLQLQHY (90 aa). 2 positions are modified to phosphoserine: Ser850 and Ser869. The disordered stretch occupies residues 862-881; that stretch reads SSMSRAQSPPVPARKNQLRA. Positions 874–911 form a coiled coil; sequence ARKNQLRAEEEKKNVIMELSEMRKQLRSEERRLQGRLL. Position 915 is a phosphoserine (Ser915). Residues 993–1014 adopt a coiled-coil conformation; that stretch reads QQQALLREQQKRLNRIKMRRDA. Disordered regions lie at residues 1086-1105, 1124-1169, and 1182-1205; these read GLDF…SLKS, RLTE…RPGT, and NEEQ…AAHA. Residues 1124–1134 are compositionally biased toward basic and acidic residues; it reads RLTEQQKKPTN. Residues 1135–1145 are compositionally biased toward acidic residues; it reads TDDEGSLVDPD. Residues 1146–1156 are compositionally biased toward basic and acidic residues; the sequence is DIMRHLSDDGR.

In terms of assembly, interacts with PLEKHG6. Interacts with ARMC9, TOGARAM1, CCDC66, CEP104 and CEP290. In terms of processing, phosphorylated. Phosphorylation increases in colcemide-treated cells.

The protein resides in the cytoplasm. It is found in the cytoskeleton. Its subcellular location is the microtubule organizing center. The protein localises to the centrosome. It localises to the spindle. The protein resides in the spindle pole. It is found in the cell projection. Its subcellular location is the cilium. Its function is as follows. May play a role in cell-cycle-dependent microtubule organization. The sequence is that of Centrosome and spindle pole associated protein 1 (Cspp1) from Mus musculus (Mouse).